Consider the following 202-residue polypeptide: Probable chemoreceptor glutamine deamidase CheD 2 (202 aa).

It belongs to the CheD family.

The enzyme catalyses L-glutaminyl-[protein] + H2O = L-glutamyl-[protein] + NH4(+). In terms of biological role, probably deamidates glutamine residues to glutamate on methyl-accepting chemotaxis receptors (MCPs), playing an important role in chemotaxis. This is Probable chemoreceptor glutamine deamidase CheD 2 from Shewanella oneidensis (strain ATCC 700550 / JCM 31522 / CIP 106686 / LMG 19005 / NCIMB 14063 / MR-1).